The chain runs to 322 residues: Undecaprenyl-phosphate 4-deoxy-4-formamido-L-arabinose transferase (322 aa).

The Cytoplasmic segment spans residues 1 to 235 (MFEIHPVKKV…TCLTTTPLRM (235 aa)). A helical membrane pass occupies residues 236–256 (LSLLGSIIAIGGFSIAVLLVI). Topologically, residues 257–269 (LRLTFGPQWAAEG) are periplasmic. Residues 270–290 (VFMLFAVLFTFIGAQFIGMGL) form a helical membrane-spanning segment. Residues 291 to 322 (LGEYIGRIYTDVRARPRYFVQQVIRPSSKENE) lie on the Cytoplasmic side of the membrane.

It belongs to the glycosyltransferase 2 family.

Its subcellular location is the cell inner membrane. It carries out the reaction UDP-4-deoxy-4-formamido-beta-L-arabinose + di-trans,octa-cis-undecaprenyl phosphate = 4-deoxy-4-formamido-alpha-L-arabinopyranosyl di-trans,octa-cis-undecaprenyl phosphate + UDP. The protein operates within glycolipid biosynthesis; 4-amino-4-deoxy-alpha-L-arabinose undecaprenyl phosphate biosynthesis; 4-amino-4-deoxy-alpha-L-arabinose undecaprenyl phosphate from UDP-4-deoxy-4-formamido-beta-L-arabinose and undecaprenyl phosphate: step 1/2. Its pathway is bacterial outer membrane biogenesis; lipopolysaccharide biosynthesis. Its function is as follows. Catalyzes the transfer of 4-deoxy-4-formamido-L-arabinose from UDP to undecaprenyl phosphate. The modified arabinose is attached to lipid A and is required for resistance to polymyxin and cationic antimicrobial peptides. The polypeptide is Undecaprenyl-phosphate 4-deoxy-4-formamido-L-arabinose transferase (Escherichia coli O17:K52:H18 (strain UMN026 / ExPEC)).